A 216-amino-acid chain; its full sequence is MSWKKFITQQESMEYYNALQAFLKSQKELGKNIYPPEHLVFNAFNLTPLENIKVVILGQDPYHREGQSHGLSFSVPEGIKIPPSLRNIYKELSTSIEGYKIPESGNLAHWAKQGILLLNSVLTVEQADPGCHAKKGWETFTDNAISEINNARSGVIFLLWGSYAHKKGSLIDKNKHTVLTSTHPSPLSAYRGFLGCKHFSQVNDILAERREQLIIW.

Residue D60 is the Proton acceptor of the active site.

It belongs to the uracil-DNA glycosylase (UDG) superfamily. UNG family.

It is found in the cytoplasm. The catalysed reaction is Hydrolyzes single-stranded DNA or mismatched double-stranded DNA and polynucleotides, releasing free uracil.. Excises uracil residues from the DNA which can arise as a result of misincorporation of dUMP residues by DNA polymerase or due to deamination of cytosine. The chain is Uracil-DNA glycosylase from Psychromonas ingrahamii (strain DSM 17664 / CCUG 51855 / 37).